Here is a 374-residue protein sequence, read N- to C-terminus: DNA replication and repair protein RecF (374 aa).

34–41 (GDNGAGKT) provides a ligand contact to ATP.

This sequence belongs to the RecF family.

The protein resides in the cytoplasm. Its function is as follows. The RecF protein is involved in DNA metabolism; it is required for DNA replication and normal SOS inducibility. RecF binds preferentially to single-stranded, linear DNA. It also seems to bind ATP. The protein is DNA replication and repair protein RecF of Rhizobium johnstonii (strain DSM 114642 / LMG 32736 / 3841) (Rhizobium leguminosarum bv. viciae).